The following is a 695-amino-acid chain: MDRPDEGPPAKTRRLSSSESPQRDPPPPPPPPPLLRLPLPPPQQRPRLQEETEAAQVLADMRGVGLGPALPPPPPYVILEEGGVRAYFTLGAECPGWDSTIESGYGEAPPPTESLEALPTPEVSGGSLEIDFEVVQPSSFGGEGALETCSAVGWGPQRLIDPKSKEEAIIIVEDEDEDEQESMRSSRRRRRRRRRKQRKVKRESRQRNAERMESILQALEDIQLDLEAVNIKAGKAFLRLKRKFIQMRRPFLERRDLIIQHIPGFWVKAFLNHPRIPILINRRDEDIFRYLTNLQVQDLRHISMGYKMKLYFQTNPYFTNMVIVKEFQRNRSGRLVSHSTPIRWHRGQEPQARRHGNQDASHSFFSWFSNHSLPEADRIAEIIKNDLWVNPLRYYLRERGSRIKRKKQEMKKRKTRGRCEVVIMEDAPDYYAVEDIFSEISDIDETIHDIKISDFMETTDYFETTDNEITDINENICDSESPDHDEVRNETTDNNESADDNETTDNNESADDNNENPEDNNKNADDNKENPDNNKHTYGNNFFNGGFWGSHGNNQDSSDSDNEADEASDDEDNDGNEGDNEGSDDDGNEGDNEGSDDDDRDIEYYEKVIEDPFDRDQDDYEDVIEIISDESVEEEEGIVEGIEQDEDVYQEEGNYEGEGNEDVWEEGEDSDDSDLEDVLQVPNGWANPGKRGKTG.

Positions 1–56 (MDRPDEGPPAKTRRLSSSESPQRDPPPPPPPPPLLRLPLPPPQQRPRLQEETEAAQ) are disordered. Residue Lys11 forms a Glycyl lysine isopeptide (Lys-Gly) (interchain with G-Cter in SUMO2) linkage. Residues Ser18 and Ser20 each carry the phosphoserine modification. The segment covering 23–44 (RDPPPPPPPPPLLRLPLPPPQQ) has biased composition (pro residues). Glycyl lysine isopeptide (Lys-Gly) (interchain with G-Cter in SUMO2) cross-links involve residues Lys163 and Lys165. The disordered stretch occupies residues 175 to 207 (EDEDEQESMRSSRRRRRRRRRKQRKVKRESRQR). The segment covering 185-202 (SSRRRRRRRRRKQRKVKR) has biased composition (basic residues). Thr340 carries the post-translational modification Phosphothreonine. 2 disordered regions span residues 471 to 603 (DINE…RDIE) and 632 to 695 (VEEE…GKTG). Residues 481 to 491 (SPDHDEVRNET) show a composition bias toward basic and acidic residues. Over residues 496-518 (ESADDNETTDNNESADDNNENPE) the composition is skewed to acidic residues. Positions 519 to 535 (DNNKNADDNKENPDNNK) are enriched in basic and acidic residues. Residues 539 to 557 (GNNFFNGGFWGSHGNNQDS) show a composition bias toward low complexity. Composition is skewed to acidic residues over residues 558-601 (SDSD…DDRD) and 632-677 (VEEE…DLED). A phosphoserine mark is found at Ser670 and Ser673.

The protein belongs to the nucleosome assembly protein (NAP) family. In terms of assembly, interacts with histones. Interacts with CASK. Part of a complex containing CASK, TBR1 and TSPYL2. In terms of processing, phosphorylation at Ser-20 and/or Thr-340 impairs function on cell proliferation. As to expression, ubiquitously expressed, with highest levels in testis, adrenal gland, cerebral cortex, ovary, skeletal muscle and spleen. Present in testis, adrenal gland, cerebral cortex and ovary (at protein level).

Its subcellular location is the nucleus. It is found in the cytoplasm. Part of the CASK/TBR1/TSPYL2 transcriptional complex which modulates gene expression in response to neuronal synaptic activity, probably by facilitating nucleosome assembly. May inhibit cell proliferation by inducing p53-dependent CDKN1A expression. This Macaca fascicularis (Crab-eating macaque) protein is Testis-specific Y-encoded-like protein 2 (TSPYL2).